We begin with the raw amino-acid sequence, 243 residues long: Uridylate kinase (243 aa).

18 to 21 contacts ATP; that stretch reads KLGG. UMP is bound at residue G59. Residues G60 and R64 each coordinate ATP. Residues D79 and 140–147 each bind UMP; that span reads MGMPYFST. Residues Y173 and D176 each contribute to the ATP site.

This sequence belongs to the UMP kinase family. In terms of assembly, homohexamer.

It localises to the cytoplasm. The enzyme catalyses UMP + ATP = UDP + ADP. Its pathway is pyrimidine metabolism; CTP biosynthesis via de novo pathway; UDP from UMP (UMPK route): step 1/1. Inhibited by UTP. Its function is as follows. Catalyzes the reversible phosphorylation of UMP to UDP. The protein is Uridylate kinase of Corynebacterium efficiens (strain DSM 44549 / YS-314 / AJ 12310 / JCM 11189 / NBRC 100395).